We begin with the raw amino-acid sequence, 301 residues long: NADH-cytochrome b5 reductase 3 (301 aa).

Residue glycine 2 is the site of N-myristoyl glycine attachment. Residues aspartate 40 to glutamine 152 enclose the FAD-binding FR-type domain. Residue lysine 42 is modified to N6-acetyllysine. A Phosphotyrosine modification is found at tyrosine 43. N6-acetyllysine is present on lysine 50. FAD contacts are provided by arginine 92, proline 93, tyrosine 94, valine 109, lysine 111, and phenylalanine 114. An N6-acetyllysine modification is found at lysine 120. 4 residues coordinate FAD: lysine 126, methionine 127, serine 128, and threonine 185.

The protein belongs to the flavoprotein pyridine nucleotide cytochrome reductase family. Component of a complex composed of cytochrome b5, NADH-cytochrome b5 reductase (CYB5R3) and MTARC2. Interacts with MTLN; the interaction is required to maintain cellular lipid composition and leads to stimulation of mitochondrial respiratory complex I activity. Requires FAD as cofactor.

The protein resides in the endoplasmic reticulum membrane. It localises to the mitochondrion outer membrane. The enzyme catalyses 2 Fe(III)-[cytochrome b5] + NADH = 2 Fe(II)-[cytochrome b5] + NAD(+) + H(+). Functionally, catalyzes the reduction of two molecules of cytochrome b5 using NADH as the electron donor. The sequence is that of NADH-cytochrome b5 reductase 3 from Mus musculus (Mouse).